The following is a 330-amino-acid chain: tRNA uridine(34) hydroxylase (330 aa).

A Rhodanese domain is found at Ser-123–Ser-217. The active-site Cysteine persulfide intermediate is the Cys-177. The tract at residues Leu-310–Ile-330 is disordered. Residues Gln-317 to Ile-330 are compositionally biased toward basic and acidic residues.

It belongs to the TrhO family.

It catalyses the reaction uridine(34) in tRNA + AH2 + O2 = 5-hydroxyuridine(34) in tRNA + A + H2O. Its function is as follows. Catalyzes oxygen-dependent 5-hydroxyuridine (ho5U) modification at position 34 in tRNAs. The protein is tRNA uridine(34) hydroxylase of Francisella philomiragia subsp. philomiragia (strain ATCC 25017 / CCUG 19701 / FSC 153 / O#319-036).